The following is a 586-amino-acid chain: NADH-quinone oxidoreductase subunit C/D 2 (586 aa).

Residues 1-173 (MKWVNKGTVE…RTDPPSHDFE (173 aa)) are NADH dehydrogenase I subunit C. An NADH dehydrogenase I subunit D region spans residues 197 to 586 (AELVLNWGPL…LDPVVGETDR (390 aa)).

This sequence in the N-terminal section; belongs to the complex I 30 kDa subunit family. It in the C-terminal section; belongs to the complex I 49 kDa subunit family. In terms of assembly, NDH-1 is composed of 13 different subunits. Subunits NuoB, CD, E, F, and G constitute the peripheral sector of the complex.

The protein localises to the cell inner membrane. It carries out the reaction a quinone + NADH + 5 H(+)(in) = a quinol + NAD(+) + 4 H(+)(out). NDH-1 shuttles electrons from NADH, via FMN and iron-sulfur (Fe-S) centers, to quinones in the respiratory chain. The immediate electron acceptor for the enzyme in this species is believed to be ubiquinone. Couples the redox reaction to proton translocation (for every two electrons transferred, four hydrogen ions are translocated across the cytoplasmic membrane), and thus conserves the redox energy in a proton gradient. The chain is NADH-quinone oxidoreductase subunit C/D 2 (nuoC2) from Aquifex aeolicus (strain VF5).